The following is a 343-amino-acid chain: Multidrug resistance protein MdtN (343 aa).

The Cytoplasmic segment spans residues 1–12 (MESTPKKAPRSK). The chain crosses the membrane as a helical; Signal-anchor for type II membrane protein span at residues 13–33 (FPALLVVALALVALVFVIWRV). Topologically, residues 34 to 343 (DSAPSTNDAY…ASAVANLEPQ (310 aa)) are periplasmic.

This sequence belongs to the membrane fusion protein (MFP) (TC 8.A.1) family. Could be part of a tripartite efflux system composed of MdtN, MdtO and MdtP.

The protein localises to the cell inner membrane. Could be involved in resistance to puromycin, acriflavine and tetraphenylarsonium chloride. This is Multidrug resistance protein MdtN (mdtN) from Escherichia coli O157:H7.